The sequence spans 1288 residues: Contactin-associated protein-like 3B (1288 aa).

A signal peptide spans 1–25 (MASVAWAVLKVLLLLPTQTWSPVGA). Positions 23 to 61 (VGAGNPPDCDSPLASALPRSSFSSSSELSSSHGPGFSRL) are disordered. At 26-1245 (GNPPDCDSPL…LVNADRRDSA (1220 aa)) the chain is on the extracellular side. In terms of domain architecture, F5/8 type C spans 31-177 (CDSPLASALP…IGMRIEVYGC (147 aa)). Disulfide bonds link cysteine 31/cysteine 177, cysteine 332/cysteine 364, cysteine 513/cysteine 545, cysteine 551/cysteine 562, cysteine 556/cysteine 571, and cysteine 573/cysteine 583. Positions 33-59 (SPLASALPRSSFSSSSELSSSHGPGFS) are enriched in low complexity. Laminin G-like domains follow at residues 183–364 (VVYF…SFSC) and 370–545 (VPVT…IDSC). The N-linked (GlcNAc...) asparagine glycan is linked to asparagine 359. The EGF-like 1 domain maps to 547-584 (ITDRCLPSYCEHGGECSQSWDTFSCDCLGTGYTGETCH). One can recognise a Fibrinogen C-terminal domain in the interval 585-792 (SSLYEQSCEA…LLCRGDKSFW (208 aa)). An N-linked (GlcNAc...) asparagine glycan is attached at asparagine 706. In terms of domain architecture, Laminin G-like 3 spans 793 to 958 (NSASFNTETS…TVTPGVEPGC (166 aa)). Disulfide bonds link cysteine 931–cysteine 958, cysteine 962–cysteine 975, cysteine 969–cysteine 984, cysteine 986–cysteine 996, and cysteine 1167–cysteine 1203. The EGF-like 2 domain maps to 959–997 (AGHCSTYGHLCRNGGRCREKRRGVTCDCAFSAYDGPFCS). A Laminin G-like 4 domain is found at 1016–1203 (EHYTLSENSS…RGHVAPMARC (188 aa)). The segment at 1215 to 1236 (ELAPRLAGGAGRSGPVDEGEPL) is disordered. Residues 1246 to 1266 (VIGGVIAVEIFILLCITAIAI) form a helical membrane-spanning segment. Residues 1267–1288 (RIYQQRKLRKENESKVSKKEEC) lie on the Cytoplasmic side of the membrane.

This sequence belongs to the neurexin family.

The protein resides in the membrane. The polypeptide is Contactin-associated protein-like 3B (CNTNAP3B) (Homo sapiens (Human)).